The primary structure comprises 1360 residues: DNA-directed RNA polymerase subunit beta (1360 aa).

The protein belongs to the RNA polymerase beta chain family. In terms of assembly, the RNAP catalytic core consists of 2 alpha, 1 beta, 1 beta' and 1 omega subunit. When a sigma factor is associated with the core the holoenzyme is formed, which can initiate transcription.

It catalyses the reaction RNA(n) + a ribonucleoside 5'-triphosphate = RNA(n+1) + diphosphate. Functionally, DNA-dependent RNA polymerase catalyzes the transcription of DNA into RNA using the four ribonucleoside triphosphates as substrates. This Caulobacter sp. (strain K31) protein is DNA-directed RNA polymerase subunit beta.